Here is a 20-residue protein sequence, read N- to C-terminus: Cytochrome P450 2A7 (20 aa).

The protein belongs to the cytochrome P450 family. Heme serves as cofactor.

The protein resides in the endoplasmic reticulum membrane. Its subcellular location is the microsome membrane. It carries out the reaction an organic molecule + reduced [NADPH--hemoprotein reductase] + O2 = an alcohol + oxidized [NADPH--hemoprotein reductase] + H2O + H(+). Exhibits a high coumarin 7-hydroxylase activity. The protein is Cytochrome P450 2A7 (CYP2A7) of Papio sp. (Baboon).